The sequence spans 390 residues: L-seryl-tRNA(Sec) selenium transferase (390 aa).

Position 225 is an N6-(pyridoxal phosphate)lysine (Lys225).

It belongs to the SelA family. It depends on pyridoxal 5'-phosphate as a cofactor.

The protein localises to the cytoplasm. It catalyses the reaction L-seryl-tRNA(Sec) + selenophosphate + H(+) = L-selenocysteinyl-tRNA(Sec) + phosphate. Its pathway is aminoacyl-tRNA biosynthesis; selenocysteinyl-tRNA(Sec) biosynthesis; selenocysteinyl-tRNA(Sec) from L-seryl-tRNA(Sec) (bacterial route): step 1/1. Its function is as follows. Converts seryl-tRNA(Sec) to selenocysteinyl-tRNA(Sec) required for selenoprotein biosynthesis. This chain is L-seryl-tRNA(Sec) selenium transferase, found in Helicobacter pylori (strain P12).